The following is a 134-amino-acid chain: uncharacterized protein (134 aa).

Helical transmembrane passes span 21–41 (FSTTLFEIVIFTFIMITLYLI), 52–72 (LVLLLIAIYVIVLQLFFTPYE), and 95–115 (IVMALDVLAGLMLILAVVYII).

Its subcellular location is the host membrane. This is an uncharacterized protein from Acidianus two-tailed virus (ATV).